The sequence spans 365 residues: Delta(7)-sterol 5(6)-desaturase ERG3 (365 aa).

Residues 1–92 (MDLVLEVADH…LLPRSSILRE (92 aa)) are Cytoplasmic-facing. Residues 93 to 113 (FLSLWVIVTIFGLLLYLFTAS) traverse the membrane as a helical segment. The Lumenal portion of the chain corresponds to 114–140 (LSYVFVFDKSIFNHPRYLKNQMAMEIK). A helical membrane pass occupies residues 141-161 (LAVSAIPWMSMLTVPWFVMEL). The Cytoplasmic segment spans residues 162–242 (NGHSKLYMKI…VDGFLQSISY (81 aa)). In terms of domain architecture, Fatty acid hydroxylase spans 187 to 311 (TFIFFTDCGV…FTTLWDRLGG (125 aa)). Positions 200-204 (HRWLH) match the Histidine box-1 motif. Residues 213–217 (HKPHH) carry the Histidine box-2 motif. The helical transmembrane segment at 243-263 (HIYPLILPLHKVSYLILFTFV) threads the bilayer. Residues 264 to 365 (NFWTVMIHDG…ENDPNTKKNN (102 aa)) lie on the Lumenal side of the membrane. Positions 288–292 (HTVHH) match the Histidine box-3 motif. Residues K324 and K344 each participate in a glycyl lysine isopeptide (Lys-Gly) (interchain with G-Cter in ubiquitin) cross-link.

The protein belongs to the sterol desaturase family. In terms of assembly, interacts with ERG28. Fe cation is required as a cofactor.

The protein resides in the endoplasmic reticulum membrane. It carries out the reaction episterol + 2 Fe(II)-[cytochrome b5] + O2 + 2 H(+) = 5-dehydroepisterol + 2 Fe(III)-[cytochrome b5] + 2 H2O. It functions in the pathway steroid metabolism; ergosterol biosynthesis; ergosterol from zymosterol: step 3/5. In terms of biological role, C-5 sterol desaturase; part of the third module of ergosterol biosynthesis pathway that includes the late steps of the pathway. ERG3 catalyzes the introduction of a C-5 double bond in the B ring to produce 5-dehydroepisterol. The third module or late pathway involves the ergosterol synthesis itself through consecutive reactions that mainly occur in the endoplasmic reticulum (ER) membrane. Firstly, the squalene synthase ERG9 catalyzes the condensation of 2 farnesyl pyrophosphate moieties to form squalene, which is the precursor of all steroids. Squalene synthase is crucial for balancing the incorporation of farnesyl diphosphate (FPP) into sterol and nonsterol isoprene synthesis. Secondly, the squalene epoxidase ERG1 catalyzes the stereospecific oxidation of squalene to (S)-2,3-epoxysqualene, which is considered to be a rate-limiting enzyme in steroid biosynthesis. Then, the lanosterol synthase ERG7 catalyzes the cyclization of (S)-2,3 oxidosqualene to lanosterol, a reaction that forms the sterol core. In the next steps, lanosterol is transformed to zymosterol through a complex process involving various demethylation, reduction and desaturation reactions. The lanosterol 14-alpha-demethylase ERG11 (also known as CYP51) catalyzes C14-demethylation of lanosterol to produce 4,4'-dimethyl cholesta-8,14,24-triene-3-beta-ol, which is critical for ergosterol biosynthesis. The C-14 reductase ERG24 reduces the C14=C15 double bond of 4,4-dimethyl-cholesta-8,14,24-trienol to produce 4,4-dimethyl-cholesta-8,24-dienol. 4,4-dimethyl-cholesta-8,24-dienol is substrate of the C-4 demethylation complex ERG25-ERG26-ERG27 in which ERG25 catalyzes the three-step monooxygenation required for the demethylation of 4,4-dimethyl and 4alpha-methylsterols, ERG26 catalyzes the oxidative decarboxylation that results in a reduction of the 3-beta-hydroxy group at the C-3 carbon to an oxo group, and ERG27 is responsible for the reduction of the keto group on the C-3. ERG28 has a role as a scaffold to help anchor ERG25, ERG26 and ERG27 to the endoplasmic reticulum and ERG29 regulates the activity of the iron-containing C4-methylsterol oxidase ERG25. Then, the sterol 24-C-methyltransferase ERG6 catalyzes the methyl transfer from S-adenosyl-methionine to the C-24 of zymosterol to form fecosterol. The C-8 sterol isomerase ERG2 catalyzes the reaction which results in unsaturation at C-7 in the B ring of sterols and thus converts fecosterol to episterol. The sterol-C5-desaturase ERG3 then catalyzes the introduction of a C-5 double bond in the B ring to produce 5-dehydroepisterol. The C-22 sterol desaturase ERG5 further converts 5-dehydroepisterol into ergosta-5,7,22,24(28)-tetraen-3beta-ol by forming the C-22(23) double bond in the sterol side chain. Finally, ergosta-5,7,22,24(28)-tetraen-3beta-ol is substrate of the C-24(28) sterol reductase ERG4 to produce ergosterol. The polypeptide is Delta(7)-sterol 5(6)-desaturase ERG3 (Saccharomyces cerevisiae (strain ATCC 204508 / S288c) (Baker's yeast)).